Here is a 2241-residue protein sequence, read N- to C-terminus: Large tegument protein deneddylase (2241 aa).

The tract at residues 1 to 238 is deubiquitination activity; the sequence is MKVTQASCHQ…IDLTGVVRES (238 aa). A Peptidase C76 domain is found at 4–226; the sequence is TQASCHQGDI…AARLVSTYRD (223 aa). Catalysis depends on residues C24, D160, and H162. The disordered stretch occupies residues 239–314; it reads ADTAATTTTA…STTSKTLATA (76 aa). A compositionally biased stretch (low complexity) spans 240–250; sequence DTAATTTTAAP. Over residues 251-268 the composition is skewed to pro residues; the sequence is SLPPLPDPIVDPGCPPGV. The segment covering 304–314 has biased composition (low complexity); sequence PSTTSKTLATA. Residues 327–331 are interaction with inner tegument protein; the sequence is SSAVP. Residues 1170–1229 form a disordered region; that stretch reads RSSQQKMEEQLQETRQQMTETSERLDRSLRQDPGSSSVTRVPEKPFKGQELAGRITPPPA. Positions 1190-1199 are enriched in basic and acidic residues; it reads TSERLDRSLR.

It belongs to the herpesviridae large tegument protein family. As to quaternary structure, interacts with host CUL1 and CUL4A; these interactions inhibit the E3 ligase activity of cullins. Interacts with inner tegument protein. Interacts with capsid vertex specific component CVC2. Interacts with the major capsid protein/MCP.

It is found in the virion tegument. The protein localises to the host cytoplasm. Its subcellular location is the host nucleus. The enzyme catalyses Thiol-dependent hydrolysis of ester, thioester, amide, peptide and isopeptide bonds formed by the C-terminal Gly of ubiquitin (a 76-residue protein attached to proteins as an intracellular targeting signal).. Functionally, large tegument protein that plays multiple roles in the viral cycle. During viral entry, remains associated with the capsid while most of the tegument is detached and participates in the capsid transport toward the host nucleus. Plays a role in the routing of the capsid at the nuclear pore complex and subsequent uncoating. Within the host nucleus, acts as a deneddylase and promotes the degradation of nuclear CRLs (cullin-RING ubiquitin ligases) and thereby stabilizes nuclear CRL substrates, while cytoplasmic CRLs remain unaffected. These modifications prevent host cell cycle S-phase progression and create a favorable environment allowing efficient viral genome replication. Participates later in the secondary envelopment of capsids. Indeed, plays a linker role for the association of the outer viral tegument to the capsids together with the inner tegument protein. This is Large tegument protein deneddylase (UL48) from Human cytomegalovirus (strain AD169) (HHV-5).